A 517-amino-acid polypeptide reads, in one-letter code: MNVFFMFSLLFLAALESCADDRRRPLEECFQEADYEEFLEIARNGLNETSNPKHVVVVGAGMAGLSAAYVLAGAGHNVTLLEASERVGGRVNTYRNETEGWYVNLGPMRLPERHRIIREYIRKFGLKLNEFLQENENAWYFIRNIRKRVWEVKKDPGVFKYPVEPSEEGKSASQLYRESLEKVIEELKRTNCSYILNKYDTYSTKEYLIKEGNLSRGAVDMIGKLPNEDSSYYLSFIESLKSDDLFSYEKRFDEIVGGFDQLPISMYQAIAEMVHLNAQVIKIQHNAEEVRVAYQTPAKTLSYVTADYVIVCSTSRAARRIYFEPPLPPKKAHALRSIHYRSGTKIFLTCTRKFWEADGIHGGKSTTDLPSRFIYYPNHNFTSDVGVIVAYTLADDADFFQALDIKTSADIVINDLSLIHQLPKEEIQALCYPSMIKKWSLDKYAMGAITSFTPYQFQDFIETVAAPVGRIYFAGEYTARVHGWLDSTIKSGLTAARDVNRASQKPSRRQLSNDNEL.

A signal peptide spans 1-18; that stretch reads MNVFFMFSLLFLAALESC. A disulfide bridge connects residues Cys29 and Cys192. FAD is bound by residues 62–63, 82–83, Arg90, and 106–109; these read MA, EA, and GPMR. A substrate-binding site is contributed by Arg109. Asn191 carries an N-linked (GlcNAc...) asparagine glycan. Val280 contributes to the FAD binding site. A disulfide bridge links Cys350 with Cys431. N-linked (GlcNAc...) asparagine glycosylation is present at Asn380. Residue Tyr391 coordinates substrate. FAD is bound by residues Glu476 and 483 to 488; that span reads GWLDST. 483–484 is a substrate binding site; sequence GW.

This sequence belongs to the flavin monoamine oxidase family. FIG1 subfamily. In terms of assembly, homodimer; non-covalently linked. It depends on FAD as a cofactor. N-glycosylated. Expressed by the venom gland.

It localises to the secreted. It carries out the reaction an L-alpha-amino acid + O2 + H2O = a 2-oxocarboxylate + H2O2 + NH4(+). Its function is as follows. Catalyzes an oxidative deamination of predominantly hydrophobic and aromatic L-amino acids, thus producing hydrogen peroxide that may contribute to the diverse toxic effects of this enzyme. Exhibits diverse biological activities, such as hemorrhage, hemolysis, edema, apoptosis of vascular endothelial cells or tumor cell lines, antibacterial and antiparasitic activities, as well as regulation of platelet aggregation. Effects of snake L-amino oxidases on platelets are controversial, since they either induce aggregation or inhibit agonist-induced aggregation. These different effects are probably due to different experimental conditions. This chain is L-amino-acid oxidase, found in Notechis scutatus scutatus (Mainland tiger snake).